The chain runs to 282 residues: Structure-specific endonuclease subunit slx1 (282 aa).

The GIY-YIG domain occupies 7-97 (GFYGVYLLFC…RLTHVPRKTK (91 aa)). Residues 191 to 243 (CRVCYERVQDKDDSLHCFHPGCTLTAHIMCLAKLFLLNEPQNLIPVEGLCPSC) form an SLX1-type zinc finger.

Belongs to the SLX1 family. In terms of assembly, forms a heterodimer with slx4. The cofactor is a divalent metal cation.

It is found in the nucleus. Functionally, catalytic subunit of the slx1-slx4 structure-specific endonuclease that resolves DNA secondary structures generated during DNA repair and recombination. Has endonuclease activity towards branched DNA substrates, introducing single-strand cuts in duplex DNA close to junctions with ss-DNA. This chain is Structure-specific endonuclease subunit slx1 (slx1a), found in Xenopus laevis (African clawed frog).